A 351-amino-acid polypeptide reads, in one-letter code: Anthranilate phosphoribosyltransferase (351 aa).

5-phospho-alpha-D-ribose 1-diphosphate-binding positions include Gly80, 83–84 (GD), Thr88, 90–93 (NVST), 108–116 (KHGNRSVTS), and Ser120. Gly80 contributes to the anthranilate binding site. Residue Ser92 participates in Mg(2+) binding. Asn111 provides a ligand contact to anthranilate. Residue Arg166 coordinates anthranilate. Asp229 and Glu230 together coordinate Mg(2+).

This sequence belongs to the anthranilate phosphoribosyltransferase family. As to quaternary structure, homodimer. Mg(2+) serves as cofactor.

It carries out the reaction N-(5-phospho-beta-D-ribosyl)anthranilate + diphosphate = 5-phospho-alpha-D-ribose 1-diphosphate + anthranilate. It functions in the pathway amino-acid biosynthesis; L-tryptophan biosynthesis; L-tryptophan from chorismate: step 2/5. In terms of biological role, catalyzes the transfer of the phosphoribosyl group of 5-phosphorylribose-1-pyrophosphate (PRPP) to anthranilate to yield N-(5'-phosphoribosyl)-anthranilate (PRA). The protein is Anthranilate phosphoribosyltransferase of Prosthecochloris aestuarii (strain DSM 271 / SK 413).